Here is a 583-residue protein sequence, read N- to C-terminus: Capsid vertex component 2 (583 aa).

The interval 1–49 (MANFIWDARILTGDGMEMFPADVKNFIAPPWPIEFWKEPVFTSNRANME) is interaction with major capsid protein/MCP.

This sequence belongs to the herpesviridae CVC2 protein family. Heterodimerizes with CVC1. Interacts with major capsid protein/MCP and triplex capsid protein 1/TRX1 at the pentamer vertices. Interacts with the large tegument protein/LTP.

It is found in the virion. It localises to the host nucleus. Functionally, capsid vertex-specific component that plays a role during viral DNA encapsidation, assuring correct genome cleavage and presumably stabilizing capsids that contain full-length viral genomes. Participates in the interaction between the capsid and the tegument through interaction with the large tegument protein/LTP. The sequence is that of Capsid vertex component 2 from Gallus gallus (Chicken).